The primary structure comprises 657 residues: Archaeal Lon protease (657 aa).

Over 1–123 the chain is Cytoplasmic; it reads MEENIESVEE…KAEREKRDRS (123 aa). Residue 57–64 participates in ATP binding; the sequence is GEPGTGKS. Residues 124-144 form a helical membrane-spanning segment; sequence RSIMFVIFSVVLLGIIAAIVL. Position 145 (Arg145) is a topological domain, extracellular. Residues 146 to 166 traverse the membrane as a helical segment; it reads SITLIFFAIMAAAFLYMAMAF. The Cytoplasmic portion of the chain corresponds to 167–657; that stretch reads NPVIRNERAM…ATTRAGNNAA (491 aa). The region spanning 433–618 is the Lon proteolytic domain; it reads GSVVGMVNGL…EDVLRVALVN (186 aa). Catalysis depends on residues Ser525 and Lys568.

This sequence belongs to the peptidase S16 family. Archaeal LonB subfamily. Homohexamer. Organized in a ring with a central cavity.

The protein localises to the cell membrane. In terms of biological role, ATP-dependent serine protease that mediates the selective degradation of mutant and abnormal proteins as well as certain short-lived regulatory proteins. Degrades polypeptides processively. This is Archaeal Lon protease from Thermoplasma acidophilum (strain ATCC 25905 / DSM 1728 / JCM 9062 / NBRC 15155 / AMRC-C165).